The following is a 298-amino-acid chain: Inosose dehydratase 2 (298 aa).

Belongs to the IolE/MocC family. Requires glutathione as cofactor. It depends on Co(2+) as a cofactor. The cofactor is Mn(2+).

It catalyses the reaction scyllo-inosose = 3D-3,5/4-trihydroxycyclohexane-1,2-dione + H2O. The protein operates within polyol metabolism; myo-inositol degradation into acetyl-CoA; acetyl-CoA from myo-inositol: step 2/7. In terms of biological role, catalyzes the dehydration of inosose (2-keto-myo-inositol, 2KMI or 2,4,6/3,5-pentahydroxycyclohexanone) to 3D-(3,5/4)-trihydroxycyclohexane-1,2-dione (D-2,3-diketo-4-deoxy-epi-inositol). The sequence is that of Inosose dehydratase 2 from Bacillus cereus (strain ZK / E33L).